The following is a 202-amino-acid chain: Ig delta chain C region (202 aa).

A disordered region spans residues 32 to 58 (KSKTFKLPETRNSQSSKKANPTPQAKN). Residues 41-56 (TRNSQSSKKANPTPQA) show a composition bias toward polar residues. The region spanning 66 to 178 (PTATKNIVGA…TKLNASKSLE (113 aa)) is the Ig-like domain.

This Rattus norvegicus (Rat) protein is Ig delta chain C region.